The primary structure comprises 144 residues: MSGNVLKVQLRSEHGIAPTKGSVYAAGYDIYASADYVIPAMGQGMVPTDISFTVPEGTYGRIAPRSGLAVKHGIQTGAGVVDRDYTGEVKIILFNHSQKDFEIKRGDRVAQLILEKIVDDAEVVVVESLEDSQRGAGGFGSTGK.

Positions 66, 79, 82, 85, 90, 134, 139, and 140 each coordinate dUMP.

This sequence belongs to the dUTPase family. In terms of assembly, homotrimer. Mg(2+) serves as cofactor.

It catalyses the reaction dUTP + H2O = dUMP + diphosphate + H(+). It participates in pyrimidine metabolism; dUMP biosynthesis; dUMP from dCTP (dUTP route): step 2/2. Its function is as follows. Involved in nucleotide metabolism via production of dUMP, the immediate precursor of thymidine nucleotides, and decreases the intracellular concentration of dUTP so that uracil cannot be incorporated into DNA. The polypeptide is Deoxyuridine 5'-triphosphate nucleotidohydrolase (DUT1) (Candida glabrata (strain ATCC 2001 / BCRC 20586 / JCM 3761 / NBRC 0622 / NRRL Y-65 / CBS 138) (Yeast)).